Consider the following 737-residue polypeptide: Genome polyprotein (737 aa).

An N-acetylserine; by host modification is found at Ser2. The interaction with STAT1 stretch occupies residues Ser2–Lys23. Residues Ser2 to Pro58 are interaction with EIF2AK2/PKR. Positions Ser2–Arg59 are interaction with DDX3X. Residues Ser2–Ser75 are disordered. Residues Ser2–Asn168 are Cytoplasmic-facing. 2 short sequence motifs (nuclear localization signal) span residues Pro5–Arg13 and Pro38–Arg43. Residues Pro7 to Asn16 show a composition bias toward basic residues. The span at Gly32–Arg47 shows a compositional bias: low complexity. Residue Ser53 is modified to Phosphoserine; by host. Short sequence motifs (nuclear localization signal) lie at residues Pro58 to Pro64 and Pro66 to Ser71. Ser99 and Ser116 each carry phosphoserine; by host. An important for endoplasmic reticulum and mitochondrial localization region spans residues Pro112–Ala152. The interaction with APOA2 stretch occupies residues Val122–Ser173. The tract at residues Tyr164–Gly167 is important for lipid droplets localization. The helical transmembrane segment at Leu169–Val189 threads the bilayer. Positions Leu178–Ala191 are cleaved as a propeptide — ER anchor for the core protein, removed in mature form by host signal peptidase. The Lumenal segment spans residues Ser190–Gly358. N-linked (GlcNAc...) asparagine; by host glycans are attached at residues Asn196, Asn209, and Asn234. An important for fusion region spans residues Val265–Gln296. The N-linked (GlcNAc...) asparagine; by host glycan is linked to Asn305. The chain crosses the membrane as a helical span at residues Leu359–Ala379. Topologically, residues Gly380–Leu729 are lumenal. An HVR1 region spans residues Thr385 to Leu411. 4 N-linked (GlcNAc...) (high mannose) asparagine; by host glycosylation sites follow: Asn417, Asn423, Asn430, and Asn448. 4 cysteine pairs are disulfide-bonded: Cys429–Cys554, Cys452–Cys459, Cys488–Cys496, and Cys505–Cys510. Residues Tyr474–Pro481 form an HVR2 region. The interval Glu482–Pro495 is CD81-binding 1. Asn542 is a glycosylation site (N-linked (GlcNAc...) asparagine; by host). The segment at Pro546 to Gly553 is CD81-binding 2. Asn558 is a glycosylation site (N-linked (GlcNAc...) (high mannose) asparagine; by host). 4 disulfides stabilise this stretch: Cys566–Cys571, Cys585–Cys589, Cys601–Cys624, and Cys611–Cys648. 2 N-linked (GlcNAc...) (high mannose) asparagine; by host glycosylation sites follow: Asn627 and Asn649. A disulfide bond links Cys656 and Cys681. The tract at residues Ser664 to Glu675 is PKR/eIF2-alpha phosphorylation homology domain (PePHD). The helical transmembrane segment at Leu730–Ala737 threads the bilayer.

Belongs to the hepacivirus polyprotein family. As to quaternary structure, homooligomer. Interacts with E1 (via C-terminus). Interacts with the non-structural protein 5A. Interacts (via N-terminus) with host STAT1 (via SH2 domain); this interaction results in decreased STAT1 phosphorylation and ubiquitin-mediated proteasome-dependent STAT1 degradation, leading to decreased IFN-stimulated gene transcription. Interacts with host STAT3; this interaction constitutively activates STAT3. Interacts with host LTBR receptor. Interacts with host TNFRSF1A receptor and possibly induces apoptosis. Interacts with host HNRPK. Interacts with host YWHAE. Interacts with host UBE3A/E6AP. Interacts with host DDX3X. Interacts with host APOA2. Interacts with host RXRA protein. Interacts with host SP110 isoform 3/Sp110b; this interaction sequesters the transcriptional corepressor SP110 away from the nucleus. Interacts with host CREB3 nuclear transcription protein; this interaction triggers cell transformation. Interacts with host ACY3. Interacts with host C1QR1. Interacts with host RBM24; this interaction, which enhances the interaction of the mature core protein with 5'-UTR, may inhibit viral translation and favor replication. Interacts with host EIF2AK2/PKR; this interaction induces the autophosphorylation of EIF2AK2. Part of the viral assembly initiation complex composed of NS2, E1, E2, NS3, NS4A, NS5A and the mature core protein. In terms of assembly, forms a heterodimer with envelope glycoprotein E2. Interacts with mature core protein. Interacts with protease NS2. The heterodimer E1/E2 interacts with host CLDN1; this interaction plays a role in viral entry into host cell. Interacts with host SPSB2 (via C-terminus). Part of the viral assembly initiation complex composed of NS2, E1, E2, NS3, NS4A, NS5A and the mature core protein. Forms a heterodimer with envelope glycoprotein E1. Interacts with host CD81 and SCARB1 receptors; these interactions play a role in viral entry into host cell. Interacts with host EIF2AK2/PKR; this interaction inhibits EIF2AK2 and probably allows the virus to evade the innate immune response. Interacts with host CD209/DC-SIGN and CLEC4M/DC-SIGNR. Interact with host SPCS1; this interaction is essential for viral particle assembly. Interacts with protease NS2. The heterodimer E1/E2 interacts with host CLDN1; this interaction plays a role in viral entry into host cell. Part of the viral assembly initiation complex composed of NS2, E1, E2, NS3, NS4A, NS5A and the mature core protein. In terms of processing, specific enzymatic cleavages in vivo yield mature proteins. The structural proteins, core, E1, E2 and p7 are produced by proteolytic processing by host signal peptidases. The core protein precursor is synthesized as a 23 kDa, which is retained in the ER membrane through the hydrophobic signal peptide. Cleavage by the signal peptidase releases the 21 kDa mature core protein. The cleavage of the core protein precursor occurs between aminoacids 176 and 188 but the exact cleavage site is not known. Some degraded forms of the core protein appear as well during the course of infection. The other proteins (p7, NS2, NS3, NS4A, NS4B, NS5A and NS5B) are cleaved by the viral proteases. Autoprocessing between NS2 and NS3 is mediated by the NS2 cysteine protease catalytic domain and regulated by the NS3 N-terminal domain. Phosphorylated by host PKC and PKA. Post-translationally, ubiquitinated; mediated by UBE3A and leading to core protein subsequent proteasomal degradation. In terms of processing, highly N-glycosylated.

Its subcellular location is the host endoplasmic reticulum membrane. The protein resides in the host mitochondrion membrane. The protein localises to the virion. It is found in the host cytoplasm. It localises to the host nucleus. Its subcellular location is the host lipid droplet. The protein resides in the virion membrane. In terms of biological role, packages viral RNA to form a viral nucleocapsid, and promotes virion budding. Participates in the viral particle production as a result of its interaction with the non-structural protein 5A. Binds RNA and may function as a RNA chaperone to induce the RNA structural rearrangements taking place during virus replication. Modulates viral translation initiation by interacting with viral IRES and 40S ribosomal subunit. Affects various cell signaling pathways, host immunity and lipid metabolism. Prevents the establishment of cellular antiviral state by blocking the interferon-alpha/beta (IFN-alpha/beta) and IFN-gamma signaling pathways and by blocking the formation of phosphorylated STAT1 and promoting ubiquitin-mediated proteasome-dependent degradation of STAT1. Activates STAT3 leading to cellular transformation. Regulates the activity of cellular genes, including c-myc and c-fos. May repress the promoter of p53, and sequester CREB3 and SP110 isoform 3/Sp110b in the cytoplasm. Represses cell cycle negative regulating factor CDKN1A, thereby interrupting an important check point of normal cell cycle regulation. Targets transcription factors involved in the regulation of inflammatory responses and in the immune response: suppresses TNF-induced NF-kappa-B activation, and activates AP-1. Binds to dendritic cells (DCs) via C1QR1, resulting in down-regulation of T-lymphocytes proliferation. Alters lipid metabolism by interacting with hepatocellular proteins involved in lipid accumulation and storage. Induces up-regulation of FAS promoter activity, and thereby contributes to the increased triglyceride accumulation in hepatocytes (steatosis). Functionally, forms a heterodimer with envelope glycoprotein E2, which mediates virus attachment to the host cell, virion internalization through clathrin-dependent endocytosis and fusion with host membrane. Fusion with the host cell is most likely mediated by both E1 and E2, through conformational rearrangements of the heterodimer required for fusion rather than a classical class II fusion mechanism. E1/E2 heterodimer binds host apolipoproteins such as APOB and ApoE thereby forming a lipo-viro-particle (LVP). APOE associated to the LVP allows the initial virus attachment to cell surface receptors such as the heparan sulfate proteoglycans (HSPGs), syndecan-1 (SDC1), syndecan-1 (SDC2), the low-density lipoprotein receptor (LDLR) and scavenger receptor class B type I (SCARB1). The cholesterol transfer activity of SCARB1 allows E2 exposure and binding of E2 to SCARB1 and the tetraspanin CD81. E1/E2 heterodimer binding on CD81 activates the epithelial growth factor receptor (EGFR) signaling pathway. Diffusion of the complex E1-E2-EGFR-SCARB1-CD81 to the cell lateral membrane allows further interaction with Claudin 1 (CLDN1) and occludin (OCLN) to finally trigger HCV entry. Its function is as follows. Forms a heterodimer with envelope glycoprotein E1, which mediates virus attachment to the host cell, virion internalization through clathrin-dependent endocytosis and fusion with host membrane. Fusion with the host cell is most likely mediated by both E1 and E2, through conformational rearrangements of the heterodimer required for fusion rather than a classical class II fusion mechanism. The interaction between envelope glycoprotein E2 and host apolipoprotein E/APOE allows the proper assembly, maturation and infectivity of the viral particles. This interaction is probably promoted via the up-regulation of cellular autophagy by the virus. E1/E2 heterodimer binds host apolipoproteins such as APOB and APOE thereby forming a lipo-viro-particle (LVP). APOE associated to the LVP allows the initial virus attachment to cell surface receptors such as the heparan sulfate proteoglycans (HSPGs), syndecan-1 (SDC1), syndecan-1 (SDC2), the low-density lipoprotein receptor (LDLR) and scavenger receptor class B type I (SCARB1). The cholesterol transfer activity of SCARB1 allows E2 exposure and binding of E2 to SCARB1 and the tetraspanin CD81. E1/E2 heterodimer binding on CD81 activates the epithelial growth factor receptor (EGFR) signaling pathway. Diffusion of the complex E1-E2-EGFR-SCARB1-CD81 to the cell lateral membrane allows further interaction with Claudin 1 (CLDN1) and occludin (OCLN) to finally trigger HCV entry. Inhibits host EIF2AK2/PKR activation, preventing the establishment of an antiviral state. Viral ligand for CD209/DC-SIGN and CLEC4M/DC-SIGNR, which are respectively found on dendritic cells (DCs), and on liver sinusoidal endothelial cells and macrophage-like cells of lymph node sinuses. These interactions allow the capture of circulating HCV particles by these cells and subsequent facilitated transmission to permissive cells such as hepatocytes and lymphocyte subpopulations. The chain is Genome polyprotein from Homo sapiens (Human).